The primary structure comprises 372 residues: Sulfate/thiosulfate import ATP-binding protein CysA (372 aa).

An ABC transporter domain is found at 3–237 (IQVQHVTKRF…PATPFVYGFL (235 aa)). 35 to 42 (GPSGCGKT) provides a ligand contact to ATP.

It belongs to the ABC transporter superfamily. Sulfate/tungstate importer (TC 3.A.1.6) family. The complex is composed of two ATP-binding proteins (CysA), two transmembrane proteins (CysT and CysW) and a solute-binding protein (CysP).

It localises to the cell inner membrane. It carries out the reaction sulfate(out) + ATP + H2O = sulfate(in) + ADP + phosphate + H(+). The catalysed reaction is thiosulfate(out) + ATP + H2O = thiosulfate(in) + ADP + phosphate + H(+). Its function is as follows. Part of the ABC transporter complex CysAWTP involved in sulfate/thiosulfate import. Responsible for energy coupling to the transport system. This Ralstonia nicotianae (strain ATCC BAA-1114 / GMI1000) (Ralstonia solanacearum) protein is Sulfate/thiosulfate import ATP-binding protein CysA.